The sequence spans 269 residues: Ribonuclease HII (269 aa).

The RNase H type-2 domain maps to 83–269 (YLIAGVDEVG…HRMSFLTNIL (187 aa)). Residues Asp89, Glu90, and Asp185 each coordinate a divalent metal cation.

The protein belongs to the RNase HII family. Mn(2+) serves as cofactor. The cofactor is Mg(2+).

The protein localises to the cytoplasm. It carries out the reaction Endonucleolytic cleavage to 5'-phosphomonoester.. Endonuclease that specifically degrades the RNA of RNA-DNA hybrids. The chain is Ribonuclease HII from Clostridium botulinum (strain Loch Maree / Type A3).